We begin with the raw amino-acid sequence, 568 residues long: UPF0313 protein FN0734 (568 aa).

The 274-residue stretch at 289–562 (ALDTIKYSVT…KQKQKDIVTE (274 aa)) folds into the Radical SAM core domain. The [4Fe-4S] cluster site is built by Cys-303, Cys-307, and Cys-310. Residues 546 to 568 (VEKDNGKKQKQKDIVTEKRKNRK) are disordered.

It belongs to the UPF0313 family. The cofactor is [4Fe-4S] cluster.

This Fusobacterium nucleatum subsp. nucleatum (strain ATCC 25586 / DSM 15643 / BCRC 10681 / CIP 101130 / JCM 8532 / KCTC 2640 / LMG 13131 / VPI 4355) protein is UPF0313 protein FN0734.